The chain runs to 549 residues: Cytoplasmic trehalase (549 aa).

Residues arginine 168, 175 to 176 (WD), asparagine 212, 221 to 223 (RSQ), 292 to 294 (RDE), and glycine 324 contribute to the substrate site. Catalysis depends on proton donor/acceptor residues aspartate 326 and glutamate 509. Glutamate 525 is a substrate binding site.

It belongs to the glycosyl hydrolase 37 family. As to quaternary structure, monomer.

The protein localises to the cytoplasm. It catalyses the reaction alpha,alpha-trehalose + H2O = alpha-D-glucose + beta-D-glucose. The protein operates within glycan degradation; trehalose degradation; D-glucose from alpha,alpha-trehalose: step 1/1. Functionally, hydrolyzes trehalose to glucose. Could be involved, in cells returning to low osmolarity conditions, in the utilization of the accumulated cytoplasmic trehalose, which was synthesized in response to high osmolarity. In Salmonella choleraesuis (strain SC-B67), this protein is Cytoplasmic trehalase.